The chain runs to 347 residues: MATTTQHMNQIFLVLLLISFAISPAISTVPKECETDSTDSCIDKTKALPLKIVAIVAILVTSMIGVAAPLFSRYVTFLHPDGKIFMIIKCFASGIILGTGFMHVLPDSFEMLSSPCLEDNPWHKFPFTGFVAMLSGLVTLAIDSIATSLYTKKAVADDSEERTTPMIIQIDHLPLTTKERSSTCSKQLLRYRVIATVLELGIIVHSVVIGLSLGATNDTCTIKGLIAALCFHQMFEGMGLGGCILQAEYTNVKKFVMAFFFAVTTPSGIALGIALSSVYKDNSPTALITVGLLNACSAGLLIYMALVDLLAAEFMGSMLQRSVKLQLNCFGAALLGCGGMSVLAKWA.

The N-terminal stretch at 1-27 (MATTTQHMNQIFLVLLLISFAISPAIS) is a signal peptide. The Extracellular segment spans residues 28–51 (TVPKECETDSTDSCIDKTKALPLK). Residues 52–72 (IVAIVAILVTSMIGVAAPLFS) traverse the membrane as a helical segment. Over 73–83 (RYVTFLHPDGK) the chain is Cytoplasmic. A helical membrane pass occupies residues 84–104 (IFMIIKCFASGIILGTGFMHV). The Extracellular segment spans residues 105–124 (LPDSFEMLSSPCLEDNPWHK). The helical transmembrane segment at 125-145 (FPFTGFVAMLSGLVTLAIDSI) threads the bilayer. The Cytoplasmic segment spans residues 146 to 192 (ATSLYTKKAVADDSEERTTPMIIQIDHLPLTTKERSSTCSKQLLRYR). A helical membrane pass occupies residues 193–213 (VIATVLELGIIVHSVVIGLSL). Over 214–224 (GATNDTCTIKG) the chain is Extracellular. Residues 225-245 (LIAALCFHQMFEGMGLGGCIL) form a helical membrane-spanning segment. Residues 246–254 (QAEYTNVKK) lie on the Cytoplasmic side of the membrane. A helical transmembrane segment spans residues 255 to 275 (FVMAFFFAVTTPSGIALGIAL). Residues 276–286 (SSVYKDNSPTA) lie on the Extracellular side of the membrane. A helical transmembrane segment spans residues 287-307 (LITVGLLNACSAGLLIYMALV). The Cytoplasmic segment spans residues 308 to 326 (DLLAAEFMGSMLQRSVKLQ). The helical transmembrane segment at 327 to 347 (LNCFGAALLGCGGMSVLAKWA) threads the bilayer.

The protein belongs to the ZIP transporter (TC 2.A.5) family.

The protein resides in the cell membrane. In terms of biological role, probably mediates zinc uptake from the rhizosphere. This Arabidopsis thaliana (Mouse-ear cress) protein is Probable zinc transporter 8 (ZIP8).